We begin with the raw amino-acid sequence, 1717 residues long: PH domain leucine-rich repeat-containing protein phosphatase 1 (1717 aa).

N-acetylmethionine is present on M1. 4 disordered regions span residues 1–25 (MEPAAAATVQRLPELGREDRASAPA), 41–118 (LAAA…GANS), 136–156 (AASSSSSSSAAAASHSPGAAG), and 252–470 (PGAA…PPPT). A compositionally biased stretch (low complexity) spans 98–110 (APQPIAGGAAPVP). Over residues 262–274 (EPPPEAGPRLAPP) the composition is skewed to pro residues. Low complexity-rich tracts occupy residues 313 to 325 (SRRASPAPSDSSP) and 333 to 345 (PVSSPRAPRPVVS). A Phosphoserine modification is found at S317. Composition is skewed to polar residues over residues 346–358 (DTESFSLSPSAES) and 408–417 (QTASSPQPQQ). A Phosphoserine modification is found at S412. In terms of domain architecture, PH spans 536–636 (RIQLSGMYNV…WLRQVSKVAS (101 aa)). 21 LRR repeats span residues 638 to 659 (RISSVDLSCCSLEHLPANLFYS), 661 to 682 (DLTHLNLKQNFLRQNPSLPAAR), 692 to 712 (KLKSLNLSNNHLGDFPLAVCS), 715 to 736 (TLAELNVSCNALRSVPAAVGVM), 738 to 760 (NLQTFLLDGNFLQSLPAELENMK), 761 to 783 (QLSYLGLSFNEFTDIPEVLEKLT), 784 to 804 (AVDKLCMSGNCVETLRLQALR), 808 to 831 (HIKHVDLRLNVIRKLIADEVDFLQ), 832 to 853 (HVTQLDLRDNKLGDLDAMIFNN), 873 to 894 (FLKALYASSNELVQLDVYPVPN), 895 to 916 (YLSYMDVSRNRLENVPEWVCES), 918 to 939 (KLEVLDIGHNQICELPARLFCN), 941 to 962 (SLRKLLAGHNQLARLPERLERT), 963 to 984 (SVEVLDVQHNQLLELPPNLLMK), 987 to 1008 (SLRFLNASANKLESLPPATLSE), 1013 to 1033 (ILQELYLTNNSLTDKCVPLLT), 1037 to 1058 (HLKILHMAYNRLQSFPASKMAK), 1061 to 1082 (ELEEIDLSGNKLKAIPTTIMNC), 1084 to 1105 (RMHTVIAHSNCIEVFPEVMQLP), 1106 to 1127 (EIKCVDLSCNELSEVTLPENLP), and 1129 to 1150 (KLQELDLTGNPRLVLDHKTLEL). The interaction with NHERF1 stretch occupies residues 1076 to 1205 (PTTIMNCRRM…NNFCDNREAL (130 aa)). Positions 1175 to 1422 (SHGYTEASGV…DSISAVVVQL (248 aa)) constitute a PPM-type phosphatase domain. D1210, G1211, K1374, and D1413 together coordinate Mn(2+). Disordered stretches follow at residues 1458–1510 (DRPS…SPAY) and 1673–1717 (EVKE…DTPL). The segment covering 1468-1489 (SSSSGMASEISSELSTSEMSSE) has biased composition (low complexity). The PDZ-binding; required for interaction with NHERF1 motif lies at 1715–1717 (TPL).

As to quaternary structure, interacts with the nucleotide free form of K-Ras (KRAS) via its LRR repeats. Interacts with AKT2, AKT3, PRKCB isoform beta-II, STK4, RPS6KB1, RAF1. Isoform 1 (predominantly) and isoform 2 interact with BRAP. Interacts with FKBP5; FKBP5 acts as a scaffold for PHLPP1 and Akt. Interacts with SCRIB; SCRIB acts as a scaffold for PHLPP1 and Akt. Interacts with NHERF1; NHERF1 scaffolds a heterotrimeric complex with PTEN at the plasma membrane. Interacts with WDR48 and USP12. Mn(2+) serves as cofactor. In colorectal cancer tissue, expression is highest in the surface epithelium of normal colonic mucosa adjacent to the cancer tissue but is largely excluded from the crypt bases. Expression is lost or significantly decreased in 78% of tested tumors (at protein level). Ubiquitously expressed in non-cancerous tissues.

Its subcellular location is the cytoplasm. The protein localises to the membrane. The protein resides in the nucleus. It localises to the cell membrane. The enzyme catalyses O-phospho-L-seryl-[protein] + H2O = L-seryl-[protein] + phosphate. It catalyses the reaction O-phospho-L-threonyl-[protein] + H2O = L-threonyl-[protein] + phosphate. With respect to regulation, insensitive to okadaic acid. Deubiquitination by WDR48-USP12 complex positively regulates PHLPP1 stability. In terms of biological role, protein phosphatase involved in regulation of Akt and PKC signaling. Mediates dephosphorylation in the C-terminal domain hydrophobic motif of members of the AGC Ser/Thr protein kinase family; specifically acts on 'Ser-473' of AKT2 and AKT3, 'Ser-660' of PRKCB and 'Ser-657' of PRKCA. Isoform 2 seems to have a major role in regulating Akt signaling in hippocampal neurons. Akt regulates the balance between cell survival and apoptosis through a cascade that primarily alters the function of transcription factors that regulate pro- and antiapoptotic genes. Dephosphorylation of 'Ser-473' of Akt triggers apoptosis and suppression of tumor growth. Dephosphorylation of PRKCA and PRKCB leads to their destabilization and degradation. Dephosphorylates STK4 on 'Thr-387' leading to STK4 activation and apoptosis. Dephosphorylates RPS6KB1 and is involved in regulation of cap-dependent translation. Inhibits cancer cell proliferation and may act as a tumor suppressor. Dephosphorylates RAF1 inhibiting its kinase activity. May act as a negative regulator of K-Ras signaling in membrane rafts. Involved in the hippocampus-dependent long-term memory formation. Involved in circadian control by regulating the consolidation of circadian periodicity after resetting. Involved in development and function of regulatory T-cells. This Homo sapiens (Human) protein is PH domain leucine-rich repeat-containing protein phosphatase 1 (PHLPP1).